Reading from the N-terminus, the 284-residue chain is Bifunctional protein FolD (284 aa).

Residues 163–165 (GRS), S188, and I229 contribute to the NADP(+) site.

Belongs to the tetrahydrofolate dehydrogenase/cyclohydrolase family. In terms of assembly, homodimer.

The enzyme catalyses (6R)-5,10-methylene-5,6,7,8-tetrahydrofolate + NADP(+) = (6R)-5,10-methenyltetrahydrofolate + NADPH. It catalyses the reaction (6R)-5,10-methenyltetrahydrofolate + H2O = (6R)-10-formyltetrahydrofolate + H(+). It participates in one-carbon metabolism; tetrahydrofolate interconversion. Its function is as follows. Catalyzes the oxidation of 5,10-methylenetetrahydrofolate to 5,10-methenyltetrahydrofolate and then the hydrolysis of 5,10-methenyltetrahydrofolate to 10-formyltetrahydrofolate. In Campylobacter hominis (strain ATCC BAA-381 / DSM 21671 / CCUG 45161 / LMG 19568 / NCTC 13146 / CH001A), this protein is Bifunctional protein FolD.